We begin with the raw amino-acid sequence, 604 residues long: Prostaglandin G/H synthase 2 (604 aa).

The first 17 residues, 1–17, serve as a signal peptide directing secretion; that stretch reads MLARAGLLCASLSPPHA. Positions 18-55 constitute an EGF-like domain; it reads ANPCCSNPCQNQGVCMSIGFDQYMCDCSRTGFYGENCS. 4 disulfides stabilise this stretch: Cys21/Cys32, Cys22/Cys145, Cys26/Cys42, and Cys44/Cys54. Asn53 carries N-linked (GlcNAc...) asparagine glycosylation. Residue Arg106 participates in substrate binding. A glycan (N-linked (GlcNAc...) asparagine) is linked at Asn130. The active-site Proton acceptor is His193. Tyr341 is a binding site for substrate. The active-site For cyclooxygenase activity is Tyr371. His374 is a binding site for heme b. The N-linked (GlcNAc...) asparagine glycan is linked to Asn396. Cys526 is subject to S-nitrosocysteine. Cys555 and Cys561 are joined by a disulfide. Asn580 carries N-linked (GlcNAc...) asparagine glycosylation.

This sequence belongs to the prostaglandin G/H synthase family. As to quaternary structure, homodimer. The cofactor is heme b. S-nitrosylation by NOS2 (iNOS) activates enzyme activity. S-nitrosylation may take place on different Cys residues in addition to Cys-526.

The protein localises to the microsome membrane. It is found in the endoplasmic reticulum membrane. The protein resides in the nucleus inner membrane. Its subcellular location is the nucleus outer membrane. It catalyses the reaction (5Z,8Z,11Z,14Z)-eicosatetraenoate + AH2 + 2 O2 = prostaglandin H2 + A + H2O. The enzyme catalyses (5Z,8Z,11Z,14Z)-eicosatetraenoate + 2 O2 = prostaglandin G2. The catalysed reaction is prostaglandin G2 + AH2 = prostaglandin H2 + A + H2O. It carries out the reaction (5Z,8Z,11Z,14Z,17Z)-eicosapentaenoate + 2 O2 = prostaglandin G3. It catalyses the reaction prostaglandin G3 + AH2 = prostaglandin H3 + A + H2O. The enzyme catalyses (8Z,11Z,14Z)-eicosatrienoate + 2 O2 = prostaglandin G1. The catalysed reaction is prostaglandin G1 + AH2 = prostaglandin H1 + A + H2O. It carries out the reaction 2-(5Z,8Z,11Z,14Z)-eicosatetraenoyl-sn-glycero-3-phosphoethanolamine + 2 O2 = 2-(prostaglandin G2)-sn-glycero-3-phosphoethanolamine. It catalyses the reaction 2-(prostaglandin G2)-sn-glycero-3-phosphoethanolamine + AH2 = 2-(prostaglandin H2)-sn-glycero-3-phosphoethanolamine + A + H2O. The enzyme catalyses 2-(5Z,8Z,11Z,14Z)-eicosatetraenoyl-sn-glycero-3-phosphocholine + 2 O2 = 2-(prostaglandin G2)-sn-glycero-3-phosphocholine. The catalysed reaction is 2-(prostaglandin G2)-sn-glycero-3-phosphocholine + AH2 = 2-(prostaglandin H2)-sn-glycero-3-phosphocholine + A + H2O. It carries out the reaction (15S)-hydroperoxy-(5Z,8Z,11Z,13E)-eicosatetraenoate + AH2 = (15S)-hydroxy-(5Z,8Z,11Z,13E)-eicosatetraenoate + A + H2O. It catalyses the reaction 2-(5Z,8Z,11Z,14Z)-eicosatetraenoyl-sn-glycero-3-phosphocholine + AH2 + O2 = 2-[(15S)-hydroxy-(5Z,8Z,11Z,13E)-eicosatetraenoyl]-sn-glycero-3-phosphocholine + A + H2O. The enzyme catalyses 2-(5Z,8Z,11Z,14Z)-eicosatetraenoyl-sn-glycero-3-phosphocholine + AH2 + O2 = 2-[(15R)-hydroxy-(5Z,8Z,11Z,13E)-eicosatetraenoyl]-sn-glycero-3-phosphocholine + A + H2O. The catalysed reaction is 2-(5Z,8Z,11Z,14Z)-eicosatetraenoyl-sn-glycero-3-phosphocholine + AH2 + O2 = 2-[(11R)-hydroxy-(5Z,8Z,12E,14Z)-eicosatetraenoyl]-sn-glycero-3-phosphocholine + A + H2O. It carries out the reaction (9Z,12Z)-octadecadienoate + AH2 + O2 = 9-hydroxy-(10E,12Z)-octadecadienoate + A + H2O. It catalyses the reaction (9Z,12Z)-octadecadienoate + AH2 + O2 = 13-hydroxy-(9Z,11E)-octadecadienoate + A + H2O. The enzyme catalyses (5Z,8Z,11Z,14Z)-eicosatetraenoate + AH2 + O2 = (15R)-hydroxy-(5Z,8Z,11Z,13E)-eicosatetraenoate + A + H2O. The catalysed reaction is (5Z,8Z,11Z,14Z)-eicosatetraenoate + AH2 + O2 = (11R)-hydroxy-(5Z,8Z,12E,14Z)-eicosatetraenoate + A + H2O. It carries out the reaction (5Z,8Z,11Z,14Z,17Z)-eicosapentaenoate + AH2 + O2 = (11R)-hydroxy-(5Z,8Z,12E,14Z,17Z)-eicosapentaenoate + A + H2O. It catalyses the reaction (5Z,8Z,11Z,14Z,17Z)-eicosapentaenoate + AH2 + O2 = (18S)-hydroxy-(5Z,8Z,11Z,14Z,16E)-eicosapentaenoate + A + H2O. The enzyme catalyses (5Z,8Z,11Z,14Z,17Z)-eicosapentaenoate + AH2 + O2 = (18R)-hydroxy-(5Z,8Z,11Z,14Z,16E)-eicosapentaenoate + A + H2O. The catalysed reaction is (5Z,8Z,11Z,14Z,17Z)-eicosapentaenoate + AH2 + O2 = (15R)-hydroxy-(5Z,8Z,11Z,13E,17Z)-eicosapentaenoate + A + H2O. It carries out the reaction (5Z,8Z,11Z,14Z,17Z)-eicosapentaenoate + AH2 + O2 = (15S)-hydroxy-(5Z,8Z,11Z,13E,17Z)-eicosapentaenoate + A + H2O. It catalyses the reaction (7Z,10Z,13Z,16Z,19Z)-docosapentaenoate + AH2 + O2 = 13R-hydroxy-(7Z,10Z,14E,16Z,19Z)-docosapentaenoate + A + H2O. The enzyme catalyses (4Z,7Z,10Z,13Z,16Z,19Z)-docosahexaenoate + AH2 + O2 = 13-hydroxy-(4Z,7Z,10Z,14E,16Z,19Z)-docosahexaenoate + A + H2O. The catalysed reaction is (5S)-hydroxy-(6E,8Z,11Z,14Z)-eicosatetraenoate + AH2 + O2 = (5S,15R)-dihydroxy-(6E,8Z,11Z,13E)-eicosatetraenoate + A + H2O. It carries out the reaction (4Z,7Z,10Z,13Z,16Z,19Z)-docosahexaenoate + AH2 + O2 = 17R-hydroxy-(4Z,7Z,10Z,13Z,15E,19Z)-docosahexaenoate + A + H2O. It catalyses the reaction (5S)-hydroxy-(6E,8Z,11Z,14Z)-eicosatetraenoate + AH2 + O2 = (5S,15S)-dihydroxy-(6E,8Z,11Z,13E)-eicosatetraenoate + A + H2O. The enzyme catalyses (5S)-hydroxy-(6E,8Z,11Z,14Z)-eicosatetraenoate + AH2 + O2 = (5S,11R)-dihydroxy-(6E,8Z,12E,14Z)-eicosatetraenoate + A + H2O. The catalysed reaction is 2-(5Z,8Z,11Z,14Z-eicosatetraenoyl)-glycerol + 2 O2 = 2-glyceryl-prostaglandin G2. It carries out the reaction 2-glyceryl-prostaglandin G2 + AH2 = 2-glyceryl-prostaglandin H2 + A + H2O. It catalyses the reaction (5Z,8Z,11Z,14Z)-eicosatetraenoate + O2 = (15R)-hydroperoxy-(5Z,8Z,11Z,13E)-eicosatetraenoate. The enzyme catalyses (5Z,8Z,11Z,14Z)-eicosatetraenoate + O2 = 11R-hydroperoxy-(5Z,8Z,12E,14Z)-eicosatetraenoate. The catalysed reaction is (9Z,12Z)-octadecadienoate + AH2 + O2 = (9R)-hydroxy-(10E,12Z)-octadecadienoate + A + H2O. It carries out the reaction (9Z,12Z)-octadecadienoate + AH2 + O2 = (9S)-hydroxy-(10E,12Z)-octadecadienoate + A + H2O. It catalyses the reaction (9Z,12Z)-octadecadienoate + AH2 + O2 = (13S)-hydroxy-(9Z,11E)-octadecadienoate + A + H2O. The enzyme catalyses (9Z,12Z)-octadecadienoate + AH2 + O2 = (13R)-hydroxy-(9Z,11E)-octadecadienoate + A + H2O. It functions in the pathway lipid metabolism; prostaglandin biosynthesis. Its function is as follows. Dual cyclooxygenase and peroxidase in the biosynthesis pathway of prostanoids, a class of C20 oxylipins mainly derived from arachidonate ((5Z,8Z,11Z,14Z)-eicosatetraenoate, AA, C20:4(n-6)), with a particular role in the inflammatory response. The cyclooxygenase activity oxygenates AA to the hydroperoxy endoperoxide prostaglandin G2 (PGG2), and the peroxidase activity reduces PGG2 to the hydroxy endoperoxide prostaglandin H2 (PGH2), the precursor of all 2-series prostaglandins and thromboxanes. This complex transformation is initiated by abstraction of hydrogen at carbon 13 (with S-stereochemistry), followed by insertion of molecular O2 to form the endoperoxide bridge between carbon 9 and 11 that defines prostaglandins. The insertion of a second molecule of O2 (bis-oxygenase activity) yields a hydroperoxy group in PGG2 that is then reduced to PGH2 by two electrons. Similarly catalyzes successive cyclooxygenation and peroxidation of dihomo-gamma-linoleate (DGLA, C20:3(n-6)) and eicosapentaenoate (EPA, C20:5(n-3)) to corresponding PGH1 and PGH3, the precursors of 1- and 3-series prostaglandins. In an alternative pathway of prostanoid biosynthesis, converts 2-arachidonoyl lysophopholipids to prostanoid lysophopholipids, which are then hydrolyzed by intracellular phospholipases to release free prostanoids. Metabolizes 2-arachidonoyl glycerol yielding the glyceryl ester of PGH2, a process that can contribute to pain response. Generates lipid mediators from n-3 and n-6 polyunsaturated fatty acids (PUFAs) via a lipoxygenase-type mechanism. Oxygenates PUFAs to hydroperoxy compounds and then reduces them to corresponding alcohols. Plays a role in the generation of resolution phase interaction products (resolvins) during both sterile and infectious inflammation. Metabolizes docosahexaenoate (DHA, C22:6(n-3)) to 17R-HDHA, a precursor of the D-series resolvins (RvDs). As a component of the biosynthetic pathway of E-series resolvins (RvEs), converts eicosapentaenoate (EPA, C20:5(n-3)) primarily to 18S-HEPE that is further metabolized by ALOX5 and LTA4H to generate 18S-RvE1 and 18S-RvE2. In vascular endothelial cells, converts docosapentaenoate (DPA, C22:5(n-3)) to 13R-HDPA, a precursor for 13-series resolvins (RvTs) shown to activate macrophage phagocytosis during bacterial infection. In activated leukocytes, contributes to oxygenation of hydroxyeicosatetraenoates (HETE) to diHETES (5,15-diHETE and 5,11-diHETE). Can also use linoleate (LA, (9Z,12Z)-octadecadienoate, C18:2(n-6)) as substrate and produce hydroxyoctadecadienoates (HODEs) in a regio- and stereospecific manner, being (9R)-HODE ((9R)-hydroxy-(10E,12Z)-octadecadienoate) and (13S)-HODE ((13S)-hydroxy-(9Z,11E)-octadecadienoate) its major products. During neuroinflammation, plays a role in neuronal secretion of specialized preresolving mediators (SPMs) 15R-lipoxin A4 that regulates phagocytic microglia. This is Prostaglandin G/H synthase 2 (PTGS2) from Neovison vison (American mink).